The sequence spans 107 residues: Acidic phospholipase A2 braziliase-I (107 aa).

Intrachain disulfides connect C26–C100, C28–C44, C43–C86, C49–C107, C50–C79, C57–C72, and C66–C77. Residues Y27, G29, and G31 each contribute to the Ca(2+) site. H47 is a catalytic residue. Ca(2+) is bound at residue D48. D80 is an active-site residue.

As to quaternary structure, monomer. It depends on Ca(2+) as a cofactor. In terms of tissue distribution, expressed by the venom gland.

The protein localises to the secreted. The enzyme catalyses a 1,2-diacyl-sn-glycero-3-phosphocholine + H2O = a 1-acyl-sn-glycero-3-phosphocholine + a fatty acid + H(+). Functionally, snake venom phospholipase A2 (PLA2) that induces significant edematogenic activity. Shows mild cytotoxicity on Trypanosoma cruzi and Leishmania infantum. Also inhibits ADP- and collagen-induced platelet aggregation. Does not show myotoxic activity. In Bothrops brazili (Brazil's lancehead), this protein is Acidic phospholipase A2 braziliase-I.